The primary structure comprises 202 residues: Glycerol-3-phosphate acyltransferase (202 aa).

The next 4 helical transmembrane spans lie at 11–31 (VLIAALVLGYACGAIPFGLIL), 87–107 (PALAAGLGAFLGHLFPVWLGF), 116–136 (FIGVLLALSPVTLAAFAAIWL), and 158–178 (LILWALGHGAVAALFLVLAAL).

This sequence belongs to the PlsY family. Probably interacts with PlsX.

The protein resides in the cell inner membrane. It catalyses the reaction an acyl phosphate + sn-glycerol 3-phosphate = a 1-acyl-sn-glycero-3-phosphate + phosphate. It functions in the pathway lipid metabolism; phospholipid metabolism. Catalyzes the transfer of an acyl group from acyl-phosphate (acyl-PO(4)) to glycerol-3-phosphate (G3P) to form lysophosphatidic acid (LPA). This enzyme utilizes acyl-phosphate as fatty acyl donor, but not acyl-CoA or acyl-ACP. The chain is Glycerol-3-phosphate acyltransferase from Methylorubrum extorquens (strain PA1) (Methylobacterium extorquens).